Here is a 187-residue protein sequence, read N- to C-terminus: Elongation factor P (187 aa).

This sequence belongs to the elongation factor P family.

It localises to the cytoplasm. It functions in the pathway protein biosynthesis; polypeptide chain elongation. Involved in peptide bond synthesis. Stimulates efficient translation and peptide-bond synthesis on native or reconstituted 70S ribosomes in vitro. Probably functions indirectly by altering the affinity of the ribosome for aminoacyl-tRNA, thus increasing their reactivity as acceptors for peptidyl transferase. In Mycolicibacterium vanbaalenii (strain DSM 7251 / JCM 13017 / BCRC 16820 / KCTC 9966 / NRRL B-24157 / PYR-1) (Mycobacterium vanbaalenii), this protein is Elongation factor P.